We begin with the raw amino-acid sequence, 399 residues long: Phosphoglycerate kinase (399 aa).

Substrate contacts are provided by residues 21 to 23 (DFN), R36, 59 to 62 (HLGR), R120, and R158. Residues K209, G297, E328, and 355 to 358 (GGDS) each bind ATP.

This sequence belongs to the phosphoglycerate kinase family. In terms of assembly, monomer.

The protein localises to the cytoplasm. The catalysed reaction is (2R)-3-phosphoglycerate + ATP = (2R)-3-phospho-glyceroyl phosphate + ADP. It participates in carbohydrate degradation; glycolysis; pyruvate from D-glyceraldehyde 3-phosphate: step 2/5. The protein is Phosphoglycerate kinase of Streptococcus thermophilus (strain ATCC BAA-491 / LMD-9).